A 520-amino-acid polypeptide reads, in one-letter code: Versicolorin B desaturase (520 aa).

Residues 22-42 (IFTTILSIFGIALSAVAAWGI) traverse the membrane as a helical segment. Asn266 and Asn426 each carry an N-linked (GlcNAc...) asparagine glycan. Position 462 (Cys462) interacts with heme.

Belongs to the cytochrome P450 family. Heme serves as cofactor.

It is found in the membrane. It carries out the reaction versicolorin B + NADPH + O2 + H(+) = versicolorin A + NADP(+) + 2 H2O. The protein operates within mycotoxin biosynthesis. Functionally, versicolorin B desaturase; part of the fragmented gene cluster that mediates the biosynthesis of dothistromin (DOTH), a polyketide toxin very similar in structure to the aflatoxin precursor, versicolorin B. The first step of the pathway is the conversion of acetate to norsolorinic acid (NOR) and requires the fatty acid synthase subunits hexA and hexB, as well as the polyketide synthase pksA. PksA combines a hexanoyl starter unit and 7 malonyl-CoA extender units to synthesize the precursor NOR. The hexanoyl starter unit is provided to the acyl-carrier protein (ACP) domain by the fungal fatty acid synthase hexA/hexB. The second step is the conversion of NOR to averantin (AVN) and requires the norsolorinic acid ketoreductase nor1, which catalyzes the dehydration of norsolorinic acid to form (1'S)-averantin. The cytochrome P450 monooxygenase avnA then catalyzes the hydroxylation of AVN to 5'hydroxyaverantin (HAVN). The next step is performed by adhA that transforms HAVN to averufin (AVF). Averufin might then be converted to hydroxyversicolorone by cypX and avfA. Hydroxyversicolorone is further converted versiconal hemiacetal acetate (VHA) by moxY. VHA is then the substrate for the versiconal hemiacetal acetate esterase est1 to yield versiconal (VAL). Versicolorin B synthase vbsA then converts VAL to versicolorin B (VERB) by closing the bisfuran ring. Then, the activity of the versicolorin B desaturase verB leads to versicolorin A (VERA). DotB, a predicted chloroperoxidase, may perform epoxidation of the A-ring of VERA. Alternatively, a cytochrome P450, such as cypX or avnA could catalyze this step. It is also possible that another, uncharacterized, cytochrome P450 enzyme is responsible for this step. Opening of the epoxide could potentially be achieved by the epoxide hydrolase epoA. However, epoA seems not to be required for DOTH biosynthesis, but other epoxide hydrolases may have the ability to complement this hydrolysis. Alternatively, opening of the epoxide ring could be achieved non-enzymatically. The next step is the deoxygenation of ring A to yield the 5,8-dihydroxyanthraquinone which is most likely catalyzed by the NADPH dehydrogenase encoded by ver1. The last stages of DOTH biosynthesis are proposed to involve hydroxylation of the bisfuran. OrdB and norB might have oxidative roles here. An alternative possibility is that cytochrome P450 monoogenases such as avnA and cypX might perform these steps in addition to previously proposed steps. This Dothistroma septosporum (strain NZE10 / CBS 128990) (Red band needle blight fungus) protein is Versicolorin B desaturase.